A 34-amino-acid polypeptide reads, in one-letter code: Beta/mu-theraphotoxin-Pe1b (34 aa).

3 cysteine pairs are disulfide-bonded: Cys2–Cys16, Cys9–Cys21, and Cys15–Cys28.

This sequence belongs to the neurotoxin 10 (Hwtx-1) family. 54 (ProTx-1) subfamily. Expressed by the venom gland.

Its subcellular location is the secreted. Ion channel impairing toxin that inhibits several voltage-gated sodium channels. It acts by inhibiting the inward component of the sodium current and by shifting the voltage dependence of channel activation to more depolarized potentials. Its most potent activity is on Nav1.7/SCN9A (IC(50)=167 nM), followed by Nav1.6/SCN8A (IC(50)=696 nM), and Nav1.2/SCN2A (IC(50)=3.54 uM). The chain is Beta/mu-theraphotoxin-Pe1b from Phormingochilus everetti (Malaysian purple earth tiger tarantula).